The following is a 552-amino-acid chain: Non-structural protein NS1 (552 aa).

The sequence is that of Non-structural protein NS1 (Segment-5) from Bluetongue virus 1 (isolate South Africa) (BTV 1).